The primary structure comprises 249 residues: Secreted flagellin C (249 aa).

Interacts with FliS.

It localises to the secreted. Might play a role in virulence. The chain is Secreted flagellin C (flaC) from Campylobacter jejuni subsp. jejuni serotype O:6 (strain 81116 / NCTC 11828).